The primary structure comprises 122 residues: MIQQESRLKVADNSGAREILVIKILGGSRVKTANIGDIIVATVKQATPGGVVKKGDVVKAVVVRTKYGTHRPDGSYIKFDENAAVIIGEDKSPKGTRIFGPVARELRDGNFMKIVSLAPEVL.

Belongs to the universal ribosomal protein uL14 family. As to quaternary structure, part of the 50S ribosomal subunit. Forms a cluster with proteins L3 and L19. In the 70S ribosome, L14 and L19 interact and together make contacts with the 16S rRNA in bridges B5 and B8.

Its function is as follows. Binds to 23S rRNA. Forms part of two intersubunit bridges in the 70S ribosome. In Ligilactobacillus salivarius (strain UCC118) (Lactobacillus salivarius), this protein is Large ribosomal subunit protein uL14.